We begin with the raw amino-acid sequence, 699 residues long: D-(-)-3-hydroxybutyrate oligomer hydrolase (699 aa).

The first 33 residues, 1-33 (MTAIRGGSRRAPGLALALLGGVLLGACHGDENA), serve as a signal peptide directing secretion. Ser311 acts as the Charge relay system in catalysis.

This sequence belongs to the D-(-)-3-hydroxybutyrate oligomer hydrolase family.

It localises to the secreted. It carries out the reaction (3R)-hydroxybutanoate dimer + H2O = 2 (R)-3-hydroxybutanoate + H(+). It participates in lipid metabolism; butanoate metabolism. Participates in the degradation of poly-3-hydroxybutyrate (PHB). It works downstream of poly(3-hydroxybutyrate) depolymerase, hydrolyzing D(-)-3-hydroxybutyrate oligomers of various length (3HB-oligomers) into 3HB-monomers. This Burkholderia pseudomallei (strain 1710b) protein is D-(-)-3-hydroxybutyrate oligomer hydrolase.